The chain runs to 473 residues: MAP kinase-activated protein kinase 5 (473 aa).

The Protein kinase domain occupies 22-304; the sequence is INWTQKLGAG…IEGVLDHPWL (283 aa). ATP contacts are provided by residues 28–36 and K51; that span reads LGAGISGPV. S115 is subject to Phosphoserine; by PKA. D148 serves as the catalytic Proton acceptor. T182 bears the Phosphothreonine; by MAPK11, MAPK14, MAPK4, MAPK6 and PKA mark. Phosphoserine occurs at positions 212 and 354. The stretch at 409–440 forms a coiled coil; that stretch reads ENEDEKLNEVMQEAWKYNRECKLLRDALQSFS.

This sequence belongs to the protein kinase superfamily. CAMK Ser/Thr protein kinase family. Interacts with SQSTM1. Interacts with ERK3/MAPK6 and ERK4/MAPK4 (via FRIEDE motif); the interaction is direct. Interacts with YWHAE; the interaction prevents phosphorylation of HSP27/HSPB1 leading to disrupt F-actin polymerization. Phosphorylated on Thr-182 ERK3/MAPK6 or ERK4/MAPK4; which is the regulatory phosphorylation site and is located on the T-loop/loop 12, leading to activation. Phosphorylation at Thr-182 by p38-alpha/MAPK14, p38-beta/MAPK11 is subject to debate. Phosphorylated at Ser-115 by PKA/PRKACA, leading to localization to the cytoplasm. Autophosphorylated. Expressed ubiquitously.

It is found in the cytoplasm. Its subcellular location is the nucleus. The catalysed reaction is L-seryl-[protein] + ATP = O-phospho-L-seryl-[protein] + ADP + H(+). The enzyme catalyses L-threonyl-[protein] + ATP = O-phospho-L-threonyl-[protein] + ADP + H(+). With respect to regulation, activated following phosphorylation at Thr-182 by p38-alpha/MAPK14, p38-beta/MAPK11, ERK2/MAPK1, ERK3/MAPK6, and ERK4/MAPK4. Activated by stress-related extracellular stimuli; such as H(2)O(2), arsenite, anisomycin TNF alpha and also PMA and the calcium ionophore A23187; but to a lesser extent. In vitro, activated by SQSTM1. Inhibited by diterpenoid alkaloid noroxoaconitine. Functionally, tumor suppressor serine/threonine-protein kinase involved in mTORC1 signaling and post-transcriptional regulation. Phosphorylates FOXO3, ERK3/MAPK6, ERK4/MAPK4, HSP27/HSPB1, p53/TP53 and RHEB. Acts as a tumor suppressor by mediating Ras-induced senescence and phosphorylating p53/TP53. Involved in post-transcriptional regulation of MYC by mediating phosphorylation of FOXO3: phosphorylation of FOXO3 leads to promote nuclear localization of FOXO3, enabling expression of miR-34b and miR-34c, 2 post-transcriptional regulators of MYC that bind to the 3'UTR of MYC transcript and prevent MYC translation. Acts as a negative regulator of mTORC1 signaling by mediating phosphorylation and inhibition of RHEB. Part of the atypical MAPK signaling via its interaction with ERK3/MAPK6 or ERK4/MAPK4: the precise role of the complex formed with ERK3/MAPK6 or ERK4/MAPK4 is still unclear, but the complex follows a complex set of phosphorylation events: upon interaction with atypical MAPK (ERK3/MAPK6 or ERK4/MAPK4), ERK3/MAPK6 (or ERK4/MAPK4) is phosphorylated and then mediates phosphorylation and activation of MAPKAPK5, which in turn phosphorylates ERK3/MAPK6 (or ERK4/MAPK4). Mediates phosphorylation of HSP27/HSPB1 in response to PKA/PRKACA stimulation, inducing F-actin rearrangement. The sequence is that of MAP kinase-activated protein kinase 5 (Mapkapk5) from Mus musculus (Mouse).